Consider the following 85-residue polypeptide: Large ribosomal subunit protein bL27 (85 aa).

Belongs to the bacterial ribosomal protein bL27 family.

This chain is Large ribosomal subunit protein bL27, found in Solibacter usitatus (strain Ellin6076).